A 673-amino-acid chain; its full sequence is Probable potassium transport system protein Kup 1 (673 aa).

Transmembrane regions (helical) follow at residues 14–34 (GAGF…SPLY), 58–78 (LSLI…WIAL), 101–121 (WLII…ALTP), 147–167 (LPIV…QRFG), 175–195 (FGPV…INLF), 196–216 (GDFS…LLSP), 220–240 (AGIF…ALYS), 252–272 (VSWP…AAWL), 294–314 (LIIF…QALI), 345–365 (LYIP…VVYF), 374–394 (AYGL…TVYL), 403–423 (VFVV…FAAS), and 427–447 (FLHG…VMAI).

It belongs to the HAK/KUP transporter (TC 2.A.72) family.

It localises to the cell membrane. It carries out the reaction K(+)(in) + H(+)(in) = K(+)(out) + H(+)(out). In terms of biological role, transport of potassium into the cell. Likely operates as a K(+):H(+) symporter. The protein is Probable potassium transport system protein Kup 1 of Lactococcus lactis subsp. cremoris (strain SK11).